The primary structure comprises 824 residues: 4-methylaminobutanoate oxidase (formaldehyde-forming) (824 aa).

His67 carries the post-translational modification Pros-8alpha-FAD histidine.

The protein belongs to the GcvT family. It depends on FAD as a cofactor.

It carries out the reaction 4-(methylamino)butanoate + O2 + H2O = 4-aminobutanoate + formaldehyde + H2O2. It participates in alkaloid degradation; nicotine degradation. In terms of biological role, catalyzes the oxidative demethylation of 4-methylaminobutanoate produced from the pyrrolidine ring of nicotine. To a much lesser extent, can also use sarcosine as substrate, but is not active against dimethylglycine, methylaminopropionitrile, methylaminopropylamine, and alpha-methylaminobutanoate. The polypeptide is 4-methylaminobutanoate oxidase (formaldehyde-forming) (abo) (Paenarthrobacter nicotinovorans (Arthrobacter nicotinovorans)).